The following is a 386-amino-acid chain: L-lactate oxidase (386 aa).

The FMN hydroxy acid dehydrogenase domain occupies 16-382; that stretch reads AQAPFPICFA…RTITLVKNDG (367 aa). Residue Y42 coordinates pyruvate. Residues 95 to 97, S124, and Q146 contribute to the FMN site; that span reads PVG. A pyruvate-binding site is contributed by Y148. Residue T174 participates in FMN binding. Residue R183 participates in pyruvate binding. The FMN site is built by K253 and S275. Positions 277 and 280 each coordinate pyruvate. The active-site Proton acceptor is H277. FMN is bound by residues 308–312 and R332; that span reads DSGVY.

Belongs to the FMN-dependent alpha-hydroxy acid dehydrogenase family. Homotetramer. FMN is required as a cofactor.

The enzyme catalyses a (2S)-2-hydroxycarboxylate + O2 = a 2-oxocarboxylate + H2O2. It catalyses the reaction (S)-lactate + O2 = pyruvate + H2O2. The catalysed reaction is 2-hydroxyoctanoate + O2 = 2-oxooctanoate + H2O2. It carries out the reaction mandelate + O2 = phenylglyoxylate + H2O2. The enzyme catalyses 2-hydroxyoctadecanoate + O2 = 2-oxooctadecanoate + H2O2. It catalyses the reaction (S)-2-hydroxyglutarate + O2 = H2O2 + 2-oxoglutarate. Oxidase that catalyzes the oxidation of a broad range of 2-hydroxyacids in vitro, such as (S)-lactate, 2-hydroxyoctanoate, mandelate, 2-hydroxyoctadecanoate and (S)-2-hydroxyglutarate, to the corresponding 2-oxoacids, with a reduction of O2 to H2O2. May be involved in the utilization of L-lactate as an energy source for growth. The chain is L-lactate oxidase from Lysinibacillus sphaericus (strain C3-41).